The primary structure comprises 206 residues: MKKLLCAVLLSPLLYSNAVLADDAKQLRETLNGTESLKADFKQTVTDINKKVIQTGAGVFALAHPNQFYWHLTAPDESQIVADGKDLWIYNPFAEEVVIMDFAEAINASPIALLVHRDDATWSQYSVTKKQDCYEIKPKSTDAGITSVNVCFNKGTLNKFNVLDDKGNLSQFDLSNQHSINAADKALFKFVLPENVDVDDQRLKTQ.

Residues 1–21 (MKKLLCAVLLSPLLYSNAVLA) form the signal peptide.

This sequence belongs to the LolA family. As to quaternary structure, monomer.

The protein localises to the periplasm. Participates in the translocation of lipoproteins from the inner membrane to the outer membrane. Only forms a complex with a lipoprotein if the residue after the N-terminal Cys is not an aspartate (The Asp acts as a targeting signal to indicate that the lipoprotein should stay in the inner membrane). This Shewanella sp. (strain MR-4) protein is Outer-membrane lipoprotein carrier protein.